Here is a 318-residue protein sequence, read N- to C-terminus: MTRWVQTFLLLVAVIRSYAEDSCPDVKVIGVGASDKLTILRGCPGIPGVPGPQGPSGPAGAKGEKGFPGIPGKMGPTGLKGERGISGPKGQKGDKGDPGIPVVGMAQNCKEWLDQGASISGWYTIYTTNGLSLTVLCDMETDGGGWIVFQRRMDGSVDFFQDWISYKRGFGRQDSEFWLGNNNLHLLTVTGSFQLRVDLTDFGNNRTSASYSDFRIAAEAQNYTLSLGTFTGGDAGDSLYGHKNKGFSTKDRDNDSSPASCAERYRGAWWYTSCHSSNLNGLYLRGNHSSFANGVNWKSGRGYKYSYEVSEIKFRPQP.

The first 19 residues, 1 to 19, serve as a signal peptide directing secretion; that stretch reads MTRWVQTFLLLVAVIRSYA. Residues 42–99 enclose the Collagen-like domain; that stretch reads GCPGIPGVPGPQGPSGPAGAKGEKGFPGIPGKMGPTGLKGERGISGPKGQKGDKGDPG. The 219-residue stretch at 100 to 318 folds into the Fibrinogen C-terminal domain; the sequence is IPVVGMAQNC…VSEIKFRPQP (219 aa). A disulfide bridge connects residues cysteine 109 and cysteine 137. 2 N-linked (GlcNAc...) asparagine glycosylation sites follow: asparagine 205 and asparagine 222. Position 253 (aspartate 253) interacts with Ca(2+). Asparagine 254 carries an N-linked (GlcNAc...) asparagine glycan. Ca(2+) is bound by residues aspartate 255 and serine 257. Cysteine 261 and cysteine 274 are joined by a disulfide. Position 273-275 (273-275) interacts with a carbohydrate; the sequence is SCH. Asparagine 287 is a glycosylation site (N-linked (GlcNAc...) asparagine).

The protein belongs to the ficolin lectin family. Homotrimer. May form higher-order oligomers. In terms of processing, N-glycosylated. Expressed in peripheral blood leukocytes. Also detected at lower levels in spleen and lung.

The protein resides in the secreted. Functionally, may function in innate immunity through activation of the lectin complement pathway. Binds to GalNAc and GlcNAc carbohydrate moieties. This chain is Ficolin-1-B, found in Xenopus laevis (African clawed frog).